A 126-amino-acid polypeptide reads, in one-letter code: Holo-[acyl-carrier-protein] synthase (126 aa).

Residues aspartate 9 and glutamate 58 each coordinate Mg(2+).

It belongs to the P-Pant transferase superfamily. AcpS family. The cofactor is Mg(2+).

The protein localises to the cytoplasm. The catalysed reaction is apo-[ACP] + CoA = holo-[ACP] + adenosine 3',5'-bisphosphate + H(+). Functionally, transfers the 4'-phosphopantetheine moiety from coenzyme A to a Ser of acyl-carrier-protein. The sequence is that of Holo-[acyl-carrier-protein] synthase from Klebsiella pneumoniae (strain 342).